Here is a 410-residue protein sequence, read N- to C-terminus: Gamma-glutamyl phosphate reductase (410 aa).

The protein belongs to the gamma-glutamyl phosphate reductase family.

It is found in the cytoplasm. It catalyses the reaction L-glutamate 5-semialdehyde + phosphate + NADP(+) = L-glutamyl 5-phosphate + NADPH + H(+). It participates in amino-acid biosynthesis; L-proline biosynthesis; L-glutamate 5-semialdehyde from L-glutamate: step 2/2. In terms of biological role, catalyzes the NADPH-dependent reduction of L-glutamate 5-phosphate into L-glutamate 5-semialdehyde and phosphate. The product spontaneously undergoes cyclization to form 1-pyrroline-5-carboxylate. The sequence is that of Gamma-glutamyl phosphate reductase from Campylobacter jejuni subsp. jejuni serotype O:2 (strain ATCC 700819 / NCTC 11168).